A 356-amino-acid chain; its full sequence is MPIDPKLNVVPFISVDHMMKLVLKVGIDTFLTELAAEIEKDFRRWPIFDKKPRVGSHSQDGVIELMPTSDGSLYGFKYVNGHPKNTHQGRQTVTAFGVLSDVGNGYPLLLSEMTILTALRTAATSALAAKYLARPNSKTMAIIGNGAQSEFQARAFRAILGIQKLRLFDIDTSATRKCARNLTGPGFDIVECGSVAEAVEGADVITTVTADKQFATILSDNHVGPGVHINAVGGDCPGKTEISMEVLLRSDIFVEYPPQTWIEGDIQQLPRTHPVTELWQVMTGEKTGRVGDRQITMFDSVGFAIEDFSALRYVRAKITDFEMFTELDLLADPDEPRDLYGMLLRCEKKLEPTAVG.

Residues R53 and K77 each contribute to the L-ornithine site. Residues T92, R120, 147-148, D169, T209, 232-235, K239, and S300 each bind NAD(+); these read AQ and VGGD. R120 is a binding site for L-ornithine. Residue D235 participates in L-ornithine binding. Catalysis depends on D235, which acts as the Proton donor/acceptor. An L-ornithine-binding site is contributed by V301.

This sequence belongs to the ornithine cyclodeaminase/mu-crystallin family. It depends on NAD(+) as a cofactor.

It catalyses the reaction L-ornithine = L-proline + NH4(+). It functions in the pathway amino-acid biosynthesis; L-proline biosynthesis; L-proline from L-ornithine: step 1/1. With respect to regulation, is inhibited by L-proline and L-lysine. Is not activated by small concentrations of L-arginine, and is even inhibited by about 50% at 0.5 mM L-arginine. Catalyzes the conversion of L-ornithine into L-proline with release of ammonia. Is involved in the utilization of octopine, a catabolic pathway that proceeds through L-arginine and L-ornithine to L-proline. Octopine is a predominant opine in plant cells transformed with Ti plasmid pTiAch5. The polypeptide is Ornithine cyclodeaminase (Agrobacterium tumefaciens (strain Ach5)).